The primary structure comprises 237 residues: NAD(P)H-hydrate epimerase (237 aa).

In terms of domain architecture, YjeF N-terminal spans 11 to 223 (AASLDRDLMN…GLDIPEYPGV (213 aa)). A (6S)-NADPHX-binding site is contributed by 61–65 (NNGGD). Positions 62 and 123 each coordinate K(+). (6S)-NADPHX contacts are provided by residues 127 to 133 (GFSFSGP) and Asp-156. Residue Ser-159 participates in K(+) binding.

Belongs to the NnrE/AIBP family. K(+) is required as a cofactor.

Its subcellular location is the cytoplasm. It localises to the mitochondrion. The catalysed reaction is (6R)-NADHX = (6S)-NADHX. The enzyme catalyses (6R)-NADPHX = (6S)-NADPHX. Catalyzes the epimerization of the S- and R-forms of NAD(P)HX, a damaged form of NAD(P)H that is a result of enzymatic or heat-dependent hydration. This is a prerequisite for the S-specific NAD(P)H-hydrate dehydratase to allow the repair of both epimers of NAD(P)HX. This chain is NAD(P)H-hydrate epimerase, found in Ajellomyces capsulatus (strain G186AR / H82 / ATCC MYA-2454 / RMSCC 2432) (Darling's disease fungus).